The chain runs to 194 residues: Cation channel sperm-associated auxiliary subunit zeta (194 aa).

Component of the CatSper complex or CatSpermasome composed of the core pore-forming members CATSPER1, CATSPER2, CATSPER3 and CATSPER4 as well as auxiliary members CATSPERB, CATSPERG2, CATSPERD, CATSPERE, CATSPERZ, C2CD6/CATSPERT, SLCO6C1, TMEM249, TMEM262 and EFCAB9. HSPA1 may be an additional auxiliary complex member. The core complex members CATSPER1, CATSPER2, CATSPER3 and CATSPER4 form a heterotetrameric channel. The auxiliary CATSPERB, CATSPERG2, CATSPERD and CATSPERE subunits form a pavilion-like structure over the pore which stabilizes the complex through interactions with CATSPER4, CATSPER3, CATSPER1 and CATSPER2 respectively. SLCO6C1 interacts with CATSPERE and TMEM262/CATSPERH interacts with CATSPERB, further stabilizing the complex. C2CD6/CATSPERT interacts at least with CATSPERD and is required for targeting the CatSper complex in the flagellar membrane. Interacts with EFCAB9; the interaction is direct, Ca(2+)-dependent and connects EFCAB9 with the CatSper complex. Dissociates from EFCAB9 at elevated pH. In terms of tissue distribution, testis-specific. Expressed in adult but not in fetal testis. Not expressed in ovary. Within testis, expression is restricted to spermatids.

Its subcellular location is the cell projection. The protein resides in the cilium. It is found in the flagellum membrane. Functionally, auxiliary component of the CatSper complex, a complex involved in sperm cell hyperactivation. Sperm cell hyperactivation is needed for sperm motility which is essential late in the preparation of sperm for fertilization. Required for a distribution of the CatSper complex in linear quadrilateral nanodomains along the flagellum, maximizing fertilization inside the mammalian female reproductive tract. Together with EFCAB9, associates with the CatSper channel pore and is required for the two-row structure of each single CatSper channel. The polypeptide is Cation channel sperm-associated auxiliary subunit zeta (Mus musculus (Mouse)).